Reading from the N-terminus, the 85-residue chain is RNA-binding protein Hfq (85 aa).

The Sm domain occupies 9–68 (DPFLNALRRERIPVSIYLVNGIKLQGQIESFDQFVVLLKNTVSQMVYKHAISTVVPARIP).

Belongs to the Hfq family. In terms of assembly, homohexamer.

In terms of biological role, RNA chaperone that binds small regulatory RNA (sRNAs) and mRNAs to facilitate mRNA translational regulation in response to envelope stress, environmental stress and changes in metabolite concentrations. Also binds with high specificity to tRNAs. This Idiomarina loihiensis (strain ATCC BAA-735 / DSM 15497 / L2-TR) protein is RNA-binding protein Hfq.